The primary structure comprises 238 residues: MAGHSKWANTKHRKERADHKKGKIFSRTIKELISAVKMGGPDPKSNARLRMIIQKAKDQNIPNENIERNLKKASSADQKNYEEVTYELYGFGGVGIIVEAMTDNKNRTASDMRVAVNKRGGALVEPGSVLYNFSRKGACYVPKHSIDEASLLTHVIDCGGEDLDSDDEEFFLVLCEPTDLASVKEALLAKGVTCSEERLIYVPLRLVDCDEETGKSNLALIEWLENIDDVDDVYHNMA.

The segment at 1–21 (MAGHSKWANTKHRKERADHKK) is disordered. A compositionally biased stretch (basic residues) spans 9–21 (NTKHRKERADHKK).

It belongs to the TACO1 family.

It localises to the cytoplasm. The polypeptide is Probable transcriptional regulatory protein CTA_0499 (Chlamydia trachomatis serovar A (strain ATCC VR-571B / DSM 19440 / HAR-13)).